The chain runs to 256 residues: Geranylgeranylglyceryl phosphate synthase (256 aa).

Residues Asp28 and Ser53 each coordinate Mg(2+). Sn-glycerol 1-phosphate contacts are provided by residues 172 to 178 (YLEAGSG), 203 to 204 (GG), and 225 to 226 (GT).

Belongs to the GGGP/HepGP synthase family. Group II subfamily. The cofactor is Mg(2+).

The protein resides in the cytoplasm. The catalysed reaction is sn-glycerol 1-phosphate + (2E,6E,10E)-geranylgeranyl diphosphate = sn-3-O-(geranylgeranyl)glycerol 1-phosphate + diphosphate. The protein operates within membrane lipid metabolism; glycerophospholipid metabolism. In terms of biological role, prenyltransferase that catalyzes the transfer of the geranylgeranyl moiety of geranylgeranyl diphosphate (GGPP) to the C3 hydroxyl of sn-glycerol-1-phosphate (G1P). This reaction is the first ether-bond-formation step in the biosynthesis of archaeal membrane lipids. This is Geranylgeranylglyceryl phosphate synthase from Methanococcus maripaludis (strain DSM 14266 / JCM 13030 / NBRC 101832 / S2 / LL).